The chain runs to 608 residues: Kelch-like protein 10 (608 aa).

The 68-residue stretch at 39–106 (CDVVIKVNGF…AYTRTVPITP (68 aa)) folds into the BTB domain. Kelch repeat units lie at residues 292 to 339 (ILFA…YLKG), 340 to 386 (YVYI…VLGN), 388 to 433 (IYAM…TLYG), 434 to 480 (KVYI…AYGE), 481 to 527 (HVYA…VVDD), and 529 to 574 (LFVV…VVPG). Ser501 carries the phosphoserine modification.

In terms of assembly, self-associates. Interacts with CUL3; indicative for the participation in an E3 ubiquitin ligase complex.

It is found in the cytoplasm. Its pathway is protein modification; protein ubiquitination. Functionally, may be a substrate-specific adapter of a CUL3-based E3 ubiquitin-protein ligase complex which mediates the ubiquitination and subsequent proteasomal degradation of target proteins during spermatogenesis. This chain is Kelch-like protein 10 (KLHL10), found in Homo sapiens (Human).